A 419-amino-acid chain; its full sequence is S-adenosylmethionine synthase (419 aa).

Residue histidine 14 participates in ATP binding. Position 16 (aspartate 16) interacts with Mg(2+). Position 42 (glutamate 42) interacts with K(+). L-methionine-binding residues include glutamate 55 and glutamine 98. The interval 98 to 108 (QSQDIYQGVDR) is flexible loop. Residues 164-166 (DSK), 242-243 (KF), aspartate 251, 257-258 (RK), alanine 274, and lysine 278 each bind ATP. L-methionine is bound at residue aspartate 251. An L-methionine-binding site is contributed by lysine 282.

This sequence belongs to the AdoMet synthase family. In terms of assembly, homotetramer; dimer of dimers. Mg(2+) serves as cofactor. K(+) is required as a cofactor.

The protein localises to the cytoplasm. The enzyme catalyses L-methionine + ATP + H2O = S-adenosyl-L-methionine + phosphate + diphosphate. Its pathway is amino-acid biosynthesis; S-adenosyl-L-methionine biosynthesis; S-adenosyl-L-methionine from L-methionine: step 1/1. Its function is as follows. Catalyzes the formation of S-adenosylmethionine (AdoMet) from methionine and ATP. The overall synthetic reaction is composed of two sequential steps, AdoMet formation and the subsequent tripolyphosphate hydrolysis which occurs prior to release of AdoMet from the enzyme. This is S-adenosylmethionine synthase from Christiangramia forsetii (strain DSM 17595 / CGMCC 1.15422 / KT0803) (Gramella forsetii).